Consider the following 249-residue polypeptide: Eukaryotic translation initiation factor 3 subunit K (249 aa).

The region spanning 46 to 222 (FDCYANLALL…VKVPTNKENE (177 aa)) is the PCI domain.

It belongs to the eIF-3 subunit K family. Component of the eukaryotic translation initiation factor 3 (eIF-3) complex.

It localises to the cytoplasm. Component of the eukaryotic translation initiation factor 3 (eIF-3) complex, which is involved in protein synthesis of a specialized repertoire of mRNAs and, together with other initiation factors, stimulates binding of mRNA and methionyl-tRNAi to the 40S ribosome. The eIF-3 complex specifically targets and initiates translation of a subset of mRNAs involved in cell proliferation. The protein is Eukaryotic translation initiation factor 3 subunit K of Neosartorya fischeri (strain ATCC 1020 / DSM 3700 / CBS 544.65 / FGSC A1164 / JCM 1740 / NRRL 181 / WB 181) (Aspergillus fischerianus).